Consider the following 379-residue polypeptide: Stimulator of interferon genes protein (379 aa).

The next 2 membrane-spanning stretches (helical) occupy residues 18–38 and 43–63; these read AKKAAFVLLSVCLVVLWDLGE and ILQWLMLHLASLQLGLLFKGV. S-palmitoyl cysteine attachment occurs at residues Cys-88 and Cys-91. The next 2 membrane-spanning stretches (helical) occupy residues 89 to 109 and 114 to 134; these read LGCPIRCGTLLLLSCYFYTPF and HLPFTWTLALLGLSQALSILL. The interval 153 to 340 is cyclic dinucleotide-binding domain (CBD); the sequence is LNVAQGMAWS…RHLKQEEKEE (188 aa). Residues Ser-162, Tyr-167, Arg-238, and Thr-263 each contribute to the 2',3'-cGAMP site. 3',3'-c-di-GMP contacts are provided by residues Ser-162, Tyr-167, 238–241, and Thr-263; that span reads RVYT. Tyr-167, Arg-238, and Thr-263 together coordinate 2',3'-cUAMP. Residues 338–363 form a disordered region; that stretch reads KEEVTVDSARTSVMPDPSMLPQGPEL. The tract at residues 340–379 is C-terminal tail (CTT); sequence EVTVDSARTSVMPDPSMLPQGPELLISSMDQPLPLRTDVF. Ser-355 is modified (phosphoserine). The short motif at 363–366 is the pLxIS motif element; it reads LLIS. Ser-366 carries the phosphoserine; by TBK1 modification.

It belongs to the STING family. In terms of assembly, homodimer; forms a homodimer in absence of cyclic nucleotide (c-di-GMP or cGAMP). Homotetramer; in presence of cyclic nucleotide (c-di-GMP or cGAMP), forms tetramers and higher-order oligomers through side-by-side packing. Interacts (when phosphorylated) with IRF3; following activation and phosphorylation on the pLxIS motif by TBK1, recruits IRF3. Interacts with TBK1; when homodimer, leading to subsequent production of IFN-beta. Interacts (via transmembrane domain) with TMEM203. In terms of processing, phosphorylation by TBK1 leads to activation and production of IFN-beta. Following cyclic nucleotide (c-di-GMP or cGAMP)-binding, activation and translocation from the endoplasmic reticulum, STING1 is phosphorylated by TBK1 at Ser-366 in the pLxIS motif. The phosphorylated pLxIS motif constitutes an IRF3-binding motif, leading to recruitment of the transcription factor IRF3 to induce type-I interferons and other cytokines. In contrast, lacks phosphorylation site at position 358, leading to reduced production of type-I interferons and other cytokines.

The protein resides in the endoplasmic reticulum membrane. The protein localises to the cytoplasm. Its subcellular location is the perinuclear region. It localises to the endoplasmic reticulum-Golgi intermediate compartment membrane. It is found in the golgi apparatus membrane. The protein resides in the cytoplasmic vesicle. The protein localises to the autophagosome membrane. Its subcellular location is the mitochondrion outer membrane. It localises to the cell membrane. The catalysed reaction is H(+)(in) = H(+)(out). Its function is as follows. Facilitator of innate immune signaling that acts as a sensor of cytosolic DNA from bacteria and viruses and promotes low production of type I interferon (IFN-alpha and IFN-beta). Compared to other mammals, STING1-dependent type I interferon induction is strongly reduced in bats, suggesting that the cGAS-STING pathway promotes a limited inflammatory response. Innate immune response is triggered in response to non-CpG double-stranded DNA from viruses and bacteria delivered to the cytoplasm. Acts by binding cyclic dinucleotides: recognizes and binds cyclic di-GMP (c-di-GMP), a second messenger produced by bacteria, cyclic UMP-AMP (2',3'-cUAMP), and cyclic GMP-AMP (cGAMP), a messenger produced by CGAS in response to DNA virus in the cytosol. Upon binding to c-di-GMP, cUAMP or cGAMP, STING1 oligomerizes, translocates from the endoplasmic reticulum and is phosphorylated by TBK1 on the pLxIS motif, leading to recruitment and subsequent activation of the transcription factor IRF3 to induce expression of type I interferon and exert a potent anti-viral state. In addition to promote the production of type I interferons, plays a direct role in autophagy. Following cGAMP-binding, STING1 buds from the endoplasmic reticulum into COPII vesicles, which then form the endoplasmic reticulum-Golgi intermediate compartment (ERGIC). The ERGIC serves as the membrane source for WIPI2 recruitment and LC3 lipidation, leading to formation of autophagosomes that target cytosolic DNA or DNA viruses for degradation by the lysosome. Promotes autophagy by acting as a proton channel that directs proton efflux from the Golgi to facilitate MAP1LC3B/LC3B lipidation. The autophagy- and interferon-inducing activities can be uncoupled and autophagy induction is independent of TBK1 phosphorylation. This Pteronotus parnellii (Parnell's mustached bat) protein is Stimulator of interferon genes protein.